The chain runs to 230 residues: Chalcone--flavanone isomerase (230 aa).

Substrate contacts are provided by Thr-52, Asn-117, and Ser-194.

The protein belongs to the chalcone isomerase family.

It catalyses the reaction a chalcone = a flavanone.. It functions in the pathway secondary metabolite biosynthesis; flavonoid biosynthesis. Functionally, catalyzes the intramolecular cyclization of bicyclic chalcones into tricyclic (S)-flavanones. Responsible for the isomerization of 4,2',4',6'-tetrahydroxychalcone (also termed chalcone) into naringenin. This chain is Chalcone--flavanone isomerase (CHI), found in Camellia sinensis (Tea plant).